The following is a 268-amino-acid chain: Protein atz-1 (268 aa).

Residues 171-243 (VDDANKLTEV…EEGEEDYEEE (73 aa)) adopt a coiled-coil conformation. Residues 229–268 (DLMKEEEGEEDYEEEENYEVEEDFEDEEEYDEEGEEEDYE) are disordered. Residues 231-268 (MKEEEGEEDYEEEENYEVEEDFEDEEEYDEEGEEEDYE) show a composition bias toward acidic residues.

It is found in the nucleus. Functionally, plays a role in meiosis, germline development and oocyte morphogenesis. May play a role in DNA replication. In the germline, involved in the maintenance of transition zone nuclei and in chromosome structure and organization, but not required for mitotic proliferation. The chain is Protein atz-1 from Caenorhabditis elegans.